Here is a 201-residue protein sequence, read N- to C-terminus: FMN-dependent NADH:quinone oxidoreductase (201 aa).

FMN is bound by residues Ser10, 16–18 (SQS), and 96–99 (MYNF).

The protein belongs to the azoreductase type 1 family. In terms of assembly, homodimer. It depends on FMN as a cofactor.

It carries out the reaction 2 a quinone + NADH + H(+) = 2 a 1,4-benzosemiquinone + NAD(+). The enzyme catalyses N,N-dimethyl-1,4-phenylenediamine + anthranilate + 2 NAD(+) = 2-(4-dimethylaminophenyl)diazenylbenzoate + 2 NADH + 2 H(+). Its function is as follows. Quinone reductase that provides resistance to thiol-specific stress caused by electrophilic quinones. Also exhibits azoreductase activity. Catalyzes the reductive cleavage of the azo bond in aromatic azo compounds to the corresponding amines. The polypeptide is FMN-dependent NADH:quinone oxidoreductase (Sodalis glossinidius (strain morsitans)).